The chain runs to 310 residues: Homeobox protein dsc-1 (310 aa).

The homeobox DNA-binding region spans 180–239; that stretch reads RRRFRTNFTELQSTFLEDSFKESHYPDHKAKKYMADFLKIPEDRITVWFQNRRAKWRRKE. Positions 262–310 are disordered; that stretch reads CFSAQHPDDGPNAKHPNSFGIPNQPMSLDQFPMNTEQDFPEFPSLQEHQ. Positions 281-298 are enriched in polar residues; the sequence is GIPNQPMSLDQFPMNTEQ.

Expressed in the bilateral sensory neurons AWA, AWB, AWC, ASE, FLP and PVD. Also expressed in the enteric intestinal and anal depressor muscles.

The protein localises to the nucleus. The protein resides in the cell projection. Its subcellular location is the axon. It is found in the cytoplasm. Transcriptional regulator which plays a role in the expulsion step of defecation by controlling enteric muscle-specific expression of exp-1 which is required for enteric muscle contraction. Not required for exp-1 expression in the PDA neuron. Also involved in controlling the length of the defecation cycle. The sequence is that of Homeobox protein dsc-1 from Caenorhabditis elegans.